We begin with the raw amino-acid sequence, 233 residues long: NAD(P)H-hydrate epimerase (233 aa).

The YjeF N-terminal domain maps to 10-217 (AINVDLELFN…ALQRKYELNL (208 aa)). 60-64 (NNGGD) is a (6S)-NADPHX binding site. K(+) is bound by residues asparagine 61 and aspartate 125. Residues 129 to 135 (GFSFKPP) and aspartate 158 contribute to the (6S)-NADPHX site. Residue serine 161 coordinates K(+).

It belongs to the NnrE/AIBP family. Requires K(+) as cofactor.

The enzyme catalyses (6R)-NADHX = (6S)-NADHX. The catalysed reaction is (6R)-NADPHX = (6S)-NADPHX. Its function is as follows. Catalyzes the epimerization of the S- and R-forms of NAD(P)HX, a damaged form of NAD(P)H that is a result of enzymatic or heat-dependent hydration. This is a prerequisite for the S-specific NAD(P)H-hydrate dehydratase to allow the repair of both epimers of NAD(P)HX. The polypeptide is NAD(P)H-hydrate epimerase (Drosophila grimshawi (Hawaiian fruit fly)).